A 622-amino-acid polypeptide reads, in one-letter code: Polypeptide N-acetylgalactosaminyltransferase 6 (622 aa).

Topologically, residues 1 to 8 (MRLLRRRH) are cytoplasmic. Residues 9 to 28 (MAVRLVMVGSAFVLFLFILQ) traverse the membrane as a helical; Signal-anchor for type II membrane protein segment. Residues 29 to 622 (RDVSGREQAT…SDPHQHWLFI (594 aa)) are Lumenal-facing. An N-linked (GlcNAc...) asparagine glycan is attached at asparagine 86. Residues 103 to 135 (WERPPQDPNGPGADGKAFQKKEWTPQETQEKEE) are disordered. Over residues 119–135 (AFQKKEWTPQETQEKEE) the composition is skewed to basic and acidic residues. The tract at residues 176-285 (LPATSVIIVF…HGWLEPLLAR (110 aa)) is catalytic subdomain A. Residues aspartate 269, histidine 271, and histidine 407 each coordinate Mn(2+). Residues 348–410 (PIKSPTFAGG…PCSVVGHVFR (63 aa)) form a catalytic subdomain B region. Asparagine 476 carries an N-linked (GlcNAc...) asparagine glycan. In terms of domain architecture, Ricin B-type lectin spans 507-622 (DHCLDVGENN…SDPHQHWLFI (116 aa)). A disulfide bond links cysteine 509 and cysteine 527. Residues aspartate 511, glutamate 514, histidine 528, and asparagine 533 each contribute to the UDP-N-acetyl-alpha-D-galactosamine site. Disulfide bonds link cysteine 553–cysteine 566 and cysteine 597–cysteine 610.

Belongs to the glycosyltransferase 2 family. GalNAc-T subfamily. Requires Mn(2+) as cofactor.

The protein resides in the golgi apparatus membrane. It carries out the reaction L-seryl-[protein] + UDP-N-acetyl-alpha-D-galactosamine = a 3-O-[N-acetyl-alpha-D-galactosaminyl]-L-seryl-[protein] + UDP + H(+). It catalyses the reaction L-threonyl-[protein] + UDP-N-acetyl-alpha-D-galactosamine = a 3-O-[N-acetyl-alpha-D-galactosaminyl]-L-threonyl-[protein] + UDP + H(+). It participates in protein modification; protein glycosylation. In terms of biological role, catalyzes the initial reaction in O-linked oligosaccharide biosynthesis, the transfer of an N-acetyl-D-galactosamine residue to a serine or threonine residue on the protein receptor. May participate in synthesis of oncofetal fibronectin. Has activity toward MUC1A, MUC2, EA2 and fibronectin peptides. This Bos taurus (Bovine) protein is Polypeptide N-acetylgalactosaminyltransferase 6 (GALNT6).